The sequence spans 438 residues: GDP-mannose 6-dehydrogenase (438 aa).

6 residues coordinate NAD(+): Tyr10, Val11, Asp30, Lys35, Thr86, and Thr124. The GDP-alpha-D-mannuronate site is built by Glu161, Lys210, Asn214, His217, Asn225, Tyr256, Tyr257, Arg259, Phe262, and Gly265. Residue Cys268 is part of the active site. Lys271 contributes to the NAD(+) binding site. A GDP-alpha-D-mannuronate-binding site is contributed by Lys324. Arg331 contacts NAD(+).

This sequence belongs to the UDP-glucose/GDP-mannose dehydrogenase family.

It carries out the reaction GDP-alpha-D-mannose + 2 NAD(+) + H2O = GDP-alpha-D-mannuronate + 2 NADH + 3 H(+). It functions in the pathway glycan biosynthesis; alginate biosynthesis. Its function is as follows. Catalyzes the oxidation of guanosine diphospho-D-mannose (GDP-D-mannose) to GDP-D-mannuronic acid, a precursor for alginate polymerization. The alginate layer causes a mucoid phenotype and provides a protective barrier against host immune defenses and antibiotics. The chain is GDP-mannose 6-dehydrogenase (algD) from Pseudomonas syringae pv. syringae.